A 236-amino-acid polypeptide reads, in one-letter code: Cytochrome c biogenesis ATP-binding export protein CcmA (236 aa).

Positions 14 to 235 constitute an ABC transporter domain; the sequence is LEATGLQVAR…SAGDRVTGTE (222 aa). 46 to 53 is a binding site for ATP; sequence GANGSGKT.

The protein belongs to the ABC transporter superfamily. CcmA exporter (TC 3.A.1.107) family. As to quaternary structure, the complex is composed of two ATP-binding proteins (CcmA) and two transmembrane proteins (CcmB).

It localises to the cell inner membrane. It catalyses the reaction heme b(in) + ATP + H2O = heme b(out) + ADP + phosphate + H(+). In terms of biological role, part of the ABC transporter complex CcmAB involved in the biogenesis of c-type cytochromes; once thought to export heme, this seems not to be the case, but its exact role is uncertain. Responsible for energy coupling to the transport system. The sequence is that of Cytochrome c biogenesis ATP-binding export protein CcmA from Alkalilimnicola ehrlichii (strain ATCC BAA-1101 / DSM 17681 / MLHE-1).